Consider the following 510-residue polypeptide: 2,3-bisphosphoglycerate-independent phosphoglycerate mutase (510 aa).

The Mn(2+) site is built by Asp13 and Ser63. The Phosphoserine intermediate role is filled by Ser63. Residues His124, 154–155 (RD), Arg186, Arg192, 262–265 (RADR), and Lys334 each bind substrate. Mn(2+)-binding residues include Asp401, His405, Asp442, His443, and His461.

This sequence belongs to the BPG-independent phosphoglycerate mutase family. In terms of assembly, monomer. Mn(2+) is required as a cofactor.

The catalysed reaction is (2R)-2-phosphoglycerate = (2R)-3-phosphoglycerate. It functions in the pathway carbohydrate degradation; glycolysis; pyruvate from D-glyceraldehyde 3-phosphate: step 3/5. In terms of biological role, catalyzes the interconversion of 2-phosphoglycerate and 3-phosphoglycerate. This is 2,3-bisphosphoglycerate-independent phosphoglycerate mutase from Vibrio vulnificus (strain YJ016).